The sequence spans 355 residues: Cobalt-precorrin-5B C(1)-methyltransferase (355 aa).

Belongs to the CbiD family.

It carries out the reaction Co-precorrin-5B + S-adenosyl-L-methionine = Co-precorrin-6A + S-adenosyl-L-homocysteine. It participates in cofactor biosynthesis; adenosylcobalamin biosynthesis; cob(II)yrinate a,c-diamide from sirohydrochlorin (anaerobic route): step 6/10. Functionally, catalyzes the methylation of C-1 in cobalt-precorrin-5B to form cobalt-precorrin-6A. This is Cobalt-precorrin-5B C(1)-methyltransferase from Parasynechococcus marenigrum (strain WH8102).